A 345-amino-acid chain; its full sequence is S-adenosylmethionine:tRNA ribosyltransferase-isomerase (345 aa).

It belongs to the QueA family. Monomer.

Its subcellular location is the cytoplasm. It carries out the reaction 7-aminomethyl-7-carbaguanosine(34) in tRNA + S-adenosyl-L-methionine = epoxyqueuosine(34) in tRNA + adenine + L-methionine + 2 H(+). The protein operates within tRNA modification; tRNA-queuosine biosynthesis. Functionally, transfers and isomerizes the ribose moiety from AdoMet to the 7-aminomethyl group of 7-deazaguanine (preQ1-tRNA) to give epoxyqueuosine (oQ-tRNA). The protein is S-adenosylmethionine:tRNA ribosyltransferase-isomerase of Shewanella putrefaciens (strain CN-32 / ATCC BAA-453).